A 614-amino-acid chain; its full sequence is MEHTPQSQLKLLLAKGKEQGYLTYAEVNDHLPADMVDADQIEDIVQMINDMGIRVYEQAPDADEIMMTEDSTDDDAAEEAAAALATVEAELGRTTDPVRMYMREMGTVELLTREGEIVIAKRIEEGIYTVQASVAEYPPAIASILDQFDRYEAEEVRLSDIISGFIDPNAADIAPTATHIGSDLSQSERDKDDSKDDSKDDDEDEEEEGPKGPDPEESKERFTQLREVHENTLKIIADKGRGHPEATVALFEIGELFKEFRLMPKQFDRLVKNMRATMDKVRVQERLIMKLCVEQAKMPKKNFVKGYTADESSIAWFDTELASKKPYAEGLKMIEPDVRRCRFKLDIIEKETGLAIASIKDINRRMSIGEAKARRAKKEMVEANLRLVISIAKKYTNRGLQFLDLIQEGNIGLMKAVDKFEYRRGYKFSTYATWWIRQAITRSIADQARTIRIPVHMIETINKLNRISRQMLQEMGREPTPEELAERMLMPEDKIRKVLKIAKEPISMETPIGDDEDSHLGDFIEDTTLELPLDSATGESLRNATHEVLAGLTAREAKVLRMRFGIDMNTDHTLEEVGKQFDVTRERIRQIEAKALRKLRHPSRSEILKSFLDE.

The disordered stretch occupies residues threonine 178–phenylalanine 222. Positions glutamine 186–serine 198 are enriched in basic and acidic residues. Residues lysine 199 to glutamate 208 are compositionally biased toward acidic residues. Residues glycine 209 to phenylalanine 222 show a composition bias toward basic and acidic residues. The interval methionine 380 to threonine 450 is sigma-70 factor domain-2. An Interaction with polymerase core subunit RpoC motif is present at residues aspartate 404–glutamine 407. The interval glutamate 459–serine 535 is sigma-70 factor domain-3. The sigma-70 factor domain-4 stretch occupies residues valine 548 to histidine 601. A DNA-binding region (H-T-H motif) is located at residues leucine 574–alanine 593.

Belongs to the sigma-70 factor family. RpoD/SigA subfamily. Interacts transiently with the RNA polymerase catalytic core.

The protein localises to the cytoplasm. Sigma factors are initiation factors that promote the attachment of RNA polymerase to specific initiation sites and are then released. This sigma factor is the primary sigma factor during exponential growth. In Shewanella violacea (strain JCM 10179 / CIP 106290 / LMG 19151 / DSS12), this protein is RNA polymerase sigma factor RpoD.